A 275-amino-acid polypeptide reads, in one-letter code: Mitochondrial outer membrane protein porin (275 aa).

Met1 is modified (blocked amino end (Met)).

This sequence belongs to the eukaryotic mitochondrial porin family. Highly divergent.

Its subcellular location is the mitochondrion outer membrane. Forms a channel of about 1,7 nM through the cell membrane that allows diffusion of small hydrophilic molecules. The channel adopts an open conformation at low or zero membrane potential and a closed conformation at potentials above 20 mv. The open state has a weak anion selectivity whereas the closed state is cation-selective. The protein is Mitochondrial outer membrane protein porin (porA) of Dictyostelium discoideum (Social amoeba).